The sequence spans 503 residues: Alpha-1-syntrophin (503 aa).

2 PH domains span residues 6–263 (RAPR…AQIG) and 287–399 (DIKQ…DGCH). Residues 40–68 (LTVSPADGEPGPEPEPAQLNGAAEPGAAP) are disordered. A PDZ domain is found at 81–164 (RVTVRKADAG…EVVLEVKYMK (84 aa)). Ser-95, Ser-178, Ser-183, Ser-187, and Ser-194 each carry phosphoserine. The segment at 177 to 203 (TSVGWDSPPASPLQRQPSSPGPQPRNL) is disordered. The region spanning 447 to 503 (PFEKLQMSSDDGTSLLFLDFGGAEGEIQLDLHSCPKTMVFIIHSFLSAKVTRLGLLA) is the SU domain. Residues 481-503 (PKTMVFIIHSFLSAKVTRLGLLA) form a calmodulin-binding region.

This sequence belongs to the syntrophin family. In terms of assembly, monomer and homodimer. Interacts with MAPK12, TGFA, GA and F-actin. Interacts with the other members of the syntrophin family: SNTB1 and SNTB2; with dystrophin protein DMD and related proteins DTNA and UTRN; SGCG and SGCA of the dystrophin glycoprotein complex; NOS1; GRB2; calmodulin and the sodium channel proteins SCN4A and SCN5A. Interacts with MYOC; regulates muscle hypertrophy. Interacts with DTNB. In terms of processing, phosphorylated by CaM-kinase II. Phosphorylation may inhibit the interaction with DMD. High expression in skeletal muscle. Expressed at intermediate level in heart, kidney and brain, and at low level in intestine, liver, lung and testis.

The protein resides in the cell membrane. It localises to the sarcolemma. It is found in the cell junction. The protein localises to the cytoplasm. Its subcellular location is the cytoskeleton. Its function is as follows. Adapter protein that binds to and probably organizes the subcellular localization of a variety of membrane proteins. May link various receptors to the actin cytoskeleton and the extracellular matrix via the dystrophin glycoprotein complex. Plays an important role in synapse formation and in the organization of UTRN and acetylcholine receptors at the neuromuscular synapse. Binds to phosphatidylinositol 4,5-bisphosphate. The protein is Alpha-1-syntrophin (Snta1) of Mus musculus (Mouse).